The primary structure comprises 570 residues: Probable diguanylate cyclase DgcQ (570 aa).

A run of 2 helical transmembrane segments spans residues 20 to 40 and 360 to 380; these read FGPGHVVNTCFLIVMLFSTLL and IALTLLWVLFTAMLLISWGVI. A GGDEF domain is found at 428–563; it reads QPFSVIQLDL…GRNRICASDA (136 aa). Residue D436 coordinates Mg(2+). N444, H449, and D453 together coordinate substrate. A Mg(2+)-binding site is contributed by E479. Residue E479 is the Proton acceptor of the active site.

As to quaternary structure, homodimer. Requires Mg(2+) as cofactor.

It is found in the cell inner membrane. It carries out the reaction 2 GTP = 3',3'-c-di-GMP + 2 diphosphate. It functions in the pathway glycan metabolism; bacterial cellulose biosynthesis. The protein operates within purine metabolism; 3',5'-cyclic di-GMP biosynthesis. Its function is as follows. Catalyzes the synthesis of cyclic-di-GMP (c-di-GMP) via the condensation of 2 GTP molecules. Cyclic-di-GMP is a second messenger which controls cell surface-associated traits in bacteria. Involved in the regulation of cellulose production. This Salmonella choleraesuis (strain SC-B67) protein is Probable diguanylate cyclase DgcQ.